Consider the following 298-residue polypeptide: Apolipoprotein E (298 aa).

Residues 1–18 form the signal peptide; the sequence is MKILWAALVLTLLAGCRA. Repeat copies occupy residues 74–95, 96–117, 118–139, 140–161, 162–183, and 223–244. Positions 74 to 244 are 8 X 22 AA approximate tandem repeats; it reads LLMEDTMKEL…RLEEVREQME (171 aa). Methionine sulfoxide is present on M137. Residue S141 is modified to Phosphoserine. The interval 152-162 is LDL and other lipoprotein receptors binding; the sequence is HLRKLRKRLQR. 156-159 is a heparin binding site; sequence LRKR. Positions 204–272 are lipid-binding and lipoprotein association; the sequence is ALTSHPLRER…SWFEPMVEDL (69 aa). Position 218 to 225 (218 to 225) interacts with heparin; that stretch reads GEQVRGRL. Residues 260-272 are specificity for association with VLDL; the sequence is RLKSWFEPMVEDL.

The protein belongs to the apolipoprotein A1/A4/E family. As to quaternary structure, homotetramer. May interact with ABCA1; functionally associated with ABCA1 in the biogenesis of HDLs. May interact with APP/A4 amyloid-beta peptide; the interaction is extremely stable in vitro but its physiological significance is unclear. May interact with MAPT. May interact with MAP2. In the cerebrospinal fluid, interacts with secreted SORL1. Interacts with PMEL; this allows the loading of PMEL luminal fragment on ILVs to induce fibril nucleation. In terms of processing, APOE exists as multiple glycosylated and sialylated glycoforms within cells and in plasma. The extent of glycosylation and sialylation are tissue and context specific. Post-translationally, glycated in plasma VLDL. Phosphorylated by FAM20C in the extracellular medium.

It is found in the secreted. Its subcellular location is the extracellular space. The protein resides in the extracellular matrix. It localises to the extracellular vesicle. The protein localises to the endosome. It is found in the multivesicular body. Functionally, APOE is an apolipoprotein, a protein associating with lipid particles, that mainly functions in lipoprotein-mediated lipid transport between organs via the plasma and interstitial fluids. APOE is a core component of plasma lipoproteins and is involved in their production, conversion and clearance. Apolipoproteins are amphipathic molecules that interact both with lipids of the lipoprotein particle core and the aqueous environment of the plasma. As such, APOE associates with chylomicrons, chylomicron remnants, very low density lipoproteins (VLDL) and intermediate density lipoproteins (IDL) but shows a preferential binding to high-density lipoproteins (HDL). It also binds a wide range of cellular receptors including the LDL receptor/LDLR, the LDL receptor-related proteins LRP1, LRP2 and LRP8 and the very low-density lipoprotein receptor/VLDLR that mediate the cellular uptake of the APOE-containing lipoprotein particles. Finally, APOE also has a heparin-binding activity and binds heparan-sulfate proteoglycans on the surface of cells, a property that supports the capture and the receptor-mediated uptake of APOE-containing lipoproteins by cells. A main function of APOE is to mediate lipoprotein clearance through the uptake of chylomicrons, VLDLs, and HDLs by hepatocytes. APOE is also involved in the biosynthesis by the liver of VLDLs as well as their uptake by peripheral tissues ensuring the delivery of triglycerides and energy storage in muscle, heart and adipose tissues. By participating in the lipoprotein-mediated distribution of lipids among tissues, APOE plays a critical role in plasma and tissues lipid homeostasis. APOE is also involved in two steps of reverse cholesterol transport, the HDLs-mediated transport of cholesterol from peripheral tissues to the liver, and thereby plays an important role in cholesterol homeostasis. First, it is functionally associated with ABCA1 in the biogenesis of HDLs in tissues. Second, it is enriched in circulating HDLs and mediates their uptake by hepatocytes. APOE also plays an important role in lipid transport in the central nervous system, regulating neuron survival and sprouting. The chain is Apolipoprotein E (APOE) from Hydrochoerus hydrochaeris (Capybara).